Here is a 134-residue protein sequence, read N- to C-terminus: Profilin-5 (134 aa).

A disulfide bond links cysteine 13 and cysteine 118. The Involved in PIP2 interaction signature appears at 84–100 (AVIRGKKGSGGITIKKT). Residue threonine 114 is modified to Phosphothreonine.

The protein belongs to the profilin family. As to quaternary structure, occurs in many kinds of cells as a complex with monomeric actin in a 1:1 ratio. In terms of processing, phosphorylated by MAP kinases.

Its subcellular location is the cytoplasm. It is found in the cytoskeleton. Its function is as follows. Binds to actin and affects the structure of the cytoskeleton. At high concentrations, profilin prevents the polymerization of actin, whereas it enhances it at low concentrations. In Olea europaea (Common olive), this protein is Profilin-5.